The following is a 108-amino-acid chain: UPF0102 protein Shewana3_3881 (108 aa).

Belongs to the UPF0102 family.

This chain is UPF0102 protein Shewana3_3881, found in Shewanella sp. (strain ANA-3).